Consider the following 64-residue polypeptide: Large ribosomal subunit protein bL28 (64 aa).

It belongs to the bacterial ribosomal protein bL28 family.

In Campylobacter jejuni subsp. doylei (strain ATCC BAA-1458 / RM4099 / 269.97), this protein is Large ribosomal subunit protein bL28.